A 123-amino-acid chain; its full sequence is Fluoride-specific ion channel FluC 1 (123 aa).

4 helical membrane-spanning segments follow: residues 1–21, 34–54, 59–79, and 99–119; these read MVDL…RYTL, PLAT…LYGF, VIWL…STYI, and LTSI…ANFF. Na(+) contacts are provided by Gly-70 and Thr-73.

It belongs to the fluoride channel Fluc/FEX (TC 1.A.43) family.

The protein resides in the cell membrane. The enzyme catalyses fluoride(in) = fluoride(out). Its activity is regulated as follows. Na(+) is not transported, but it plays an essential structural role and its presence is essential for fluoride channel function. Functionally, fluoride-specific ion channel. Important for reducing fluoride concentration in the cell, thus reducing its toxicity. The protein is Fluoride-specific ion channel FluC 1 of Carboxydothermus hydrogenoformans (strain ATCC BAA-161 / DSM 6008 / Z-2901).